A 148-amino-acid polypeptide reads, in one-letter code: Suppressor APC domain-containing protein 1 (148 aa).

The tract at residues 120 to 148 is disordered; it reads SRQQKGVTQPKEEMAQRGCTKGPRGPTRV.

In Homo sapiens (Human), this protein is Suppressor APC domain-containing protein 1 (SAPCD1).